The sequence spans 516 residues: Golgin-84 (516 aa).

The Cytoplasmic portion of the chain corresponds to 1–492 (MSSWITGLAD…TFLRRYPMMR (492 aa)). The disordered stretch occupies residues 28–80 (QTENATGSADPMRRSMTSSTQSLSTSLKSTLSPVRRSGANSSSSVKSDGGVSV). The span at 42 to 80 (SMTSSTQSLSTSLKSTLSPVRRSGANSSSSVKSDGGVSV) shows a compositional bias: low complexity. Phosphoserine occurs at positions 64 and 74. The stretch at 108 to 423 (TNELAAFKIA…KAQTQLQQNM (316 aa)) forms a coiled coil. A helical; Anchor for type IV membrane protein transmembrane segment spans residues 493–513 (VSVIVYVALLHLWVMFVLLST). Residues 514–516 (TPN) lie on the Lumenal side of the membrane.

Its subcellular location is the golgi apparatus membrane. May be involved in maintaining Golgi structure and in intra-Golgi transport. This Drosophila melanogaster (Fruit fly) protein is Golgin-84 (Golgin84).